We begin with the raw amino-acid sequence, 173 residues long: Adenine phosphoribosyltransferase (173 aa).

This sequence belongs to the purine/pyrimidine phosphoribosyltransferase family. As to quaternary structure, homodimer.

The protein resides in the cytoplasm. The enzyme catalyses AMP + diphosphate = 5-phospho-alpha-D-ribose 1-diphosphate + adenine. Its pathway is purine metabolism; AMP biosynthesis via salvage pathway; AMP from adenine: step 1/1. Functionally, catalyzes a salvage reaction resulting in the formation of AMP, that is energically less costly than de novo synthesis. In Ureaplasma parvum serovar 3 (strain ATCC 27815 / 27 / NCTC 11736), this protein is Adenine phosphoribosyltransferase.